The sequence spans 1196 residues: Phosphatidylinositol-3,5-bisphosphate 3-phosphatase MTMR3 (1196 aa).

Position 8 is a phosphoserine (serine 8). The Myotubularin phosphatase domain maps to 155–576; it reads EHVTSRFKNE…RNLMLWSAVY (422 aa). A 1,2-diacyl-sn-glycero-3-phospho-(1D-myo-inositol-3,5-bisphosphate) contacts are provided by asparagine 326, asparagine 351, and isoleucine 352. Residues asparagine 326, asparagine 351, and isoleucine 352 each coordinate a 1,2-diacyl-sn-glycero-3-phospho-(1D-myo-inositol-3-phosphate). Residue cysteine 413 is the Phosphocysteine intermediate of the active site. A 1,2-diacyl-sn-glycero-3-phospho-(1D-myo-inositol-3,5-bisphosphate) contacts are provided by serine 414, aspartate 415, glycine 416, tryptophan 417, aspartate 418, arginine 419, lysine 455, and arginine 459. Positions 414, 415, 416, 417, 418, and 419 each coordinate a 1,2-diacyl-sn-glycero-3-phospho-(1D-myo-inositol-3-phosphate). Arginine 459 contacts a 1,2-diacyl-sn-glycero-3-phospho-(1D-myo-inositol-3-phosphate). The disordered stretch occupies residues 587 to 612; sequence DDSCAPYPVPGTSPDEPPLSRLPKTR. Residues 593–603 show a composition bias toward pro residues; the sequence is YPVPGTSPDEP. Phosphoserine occurs at positions 613, 633, 647, and 651. 2 disordered regions span residues 697–719 and 855–900; these read TKEESGVEEPTHRGHTEVPEVKE and ESGP…HRTS. Serine 907 carries the phosphoserine modification. A compositionally biased stretch (polar residues) spans 993 to 1008; it reads NSHSGRPSTTSSPDQP. The tract at residues 993-1019 is disordered; that stretch reads NSHSGRPSTTSSPDQPSRSHLDDDGMP. Residues 1027 to 1060 adopt a coiled-coil conformation; the sequence is QRLRQIESGHQQEVETLKKQVQELKSRLESQYLT. Serine 1062 is subject to Phosphoserine. The FYVE-type zinc finger occupies 1117 to 1177; that stretch reads DHLAAHCYAC…VCKSCYSSLH (61 aa). Residues cysteine 1123, cysteine 1126, cysteine 1139, cysteine 1142, cysteine 1147, cysteine 1150, cysteine 1169, and cysteine 1172 each coordinate Zn(2+).

This sequence belongs to the protein-tyrosine phosphatase family. Non-receptor class myotubularin subfamily. As to quaternary structure, forms heterodimers with MTMR4 that recruit both CEP55 and PLK1; occurs during early mitosis, regulates the phosphorylation of CEP55 by PLK1 and its recruitment to the midbody where it mediates cell abscission.

It localises to the cytoplasm. It is found in the cytosol. Its subcellular location is the membrane. It catalyses the reaction a 1,2-diacyl-sn-glycero-3-phospho-(1D-myo-inositol-3,5-bisphosphate) + H2O = a 1,2-diacyl-sn-glycero-3-phospho-(1D-myo-inositol-5-phosphate) + phosphate. The enzyme catalyses a 1,2-diacyl-sn-glycero-3-phospho-(1D-myo-inositol-3-phosphate) + H2O = a 1,2-diacyl-sn-glycero-3-phospho-(1D-myo-inositol) + phosphate. The catalysed reaction is 1,2-dihexadecanoyl-sn-glycero-3-phospho-(1D-myo-inositol-3-phosphate) + H2O = 1,2-dihexadecanoyl-sn-glycero-3-phospho-(1D-myo-inositol) + phosphate. It carries out the reaction 1,2-dioctanoyl-sn-glycero-3-phospho-(1-D-myo-inositol-3-phosphate) + H2O = 1,2-dioctanoyl-sn-glycero-3-phospho-(1D-myo-inositol) + phosphate. It catalyses the reaction 1,2-dihexadecanoyl-sn-glycero-3-phospho-(1D-myo-inositol-3,5-phosphate) + H2O = 1,2-dihexadecanoyl-sn-glycero-3-phospho-(1D-myo-inositol-5-phosphate) + phosphate. In terms of biological role, lipid phosphatase that specifically dephosphorylates the D-3 position of phosphatidylinositol 3-phosphate and phosphatidylinositol 3,5-bisphosphate, generating phosphatidylinositol and phosphatidylinositol 5-phosphate. Decreases the levels of phosphatidylinositol 3-phosphate, a phospholipid found in cell membranes where it acts as key regulator of both cell signaling and intracellular membrane traffic. Could also have a molecular sequestering/adapter activity and regulate biological processes independently of its phosphatase activity. It includes the regulation of midbody abscission during mitotic cytokinesis. The chain is Phosphatidylinositol-3,5-bisphosphate 3-phosphatase MTMR3 from Mus musculus (Mouse).